A 506-amino-acid polypeptide reads, in one-letter code: 2,3-bisphosphoglycerate-independent phosphoglycerate mutase (506 aa).

Mn(2+) contacts are provided by Asp-13 and Ser-63. Ser-63 acts as the Phosphoserine intermediate in catalysis. Residues His-124, 153 to 154 (RD), Arg-183, Arg-189, 254 to 257 (RADR), and Lys-330 contribute to the substrate site. 5 residues coordinate Mn(2+): Asp-396, His-400, Asp-437, His-438, and His-456.

The protein belongs to the BPG-independent phosphoglycerate mutase family. As to quaternary structure, monomer. It depends on Mn(2+) as a cofactor.

It catalyses the reaction (2R)-2-phosphoglycerate = (2R)-3-phosphoglycerate. Its pathway is carbohydrate degradation; glycolysis; pyruvate from D-glyceraldehyde 3-phosphate: step 3/5. In terms of biological role, catalyzes the interconversion of 2-phosphoglycerate and 3-phosphoglycerate. The chain is 2,3-bisphosphoglycerate-independent phosphoglycerate mutase from Cereibacter sphaeroides (strain ATCC 17023 / DSM 158 / JCM 6121 / CCUG 31486 / LMG 2827 / NBRC 12203 / NCIMB 8253 / ATH 2.4.1.) (Rhodobacter sphaeroides).